We begin with the raw amino-acid sequence, 360 residues long: Peptide chain release factor 1 (360 aa).

N5-methylglutamine is present on Q235. The interval 281 to 310 is disordered; the sequence is AERQRQDAAQAESRRLQVGSGDRSQRIRTY.

Belongs to the prokaryotic/mitochondrial release factor family. In terms of processing, methylated by PrmC. Methylation increases the termination efficiency of RF1.

It localises to the cytoplasm. Functionally, peptide chain release factor 1 directs the termination of translation in response to the peptide chain termination codons UAG and UAA. This chain is Peptide chain release factor 1, found in Stenotrophomonas maltophilia (strain R551-3).